Here is a 361-residue protein sequence, read N- to C-terminus: uncharacterized protein (361 aa).

ATP is bound at residue Gly-41–Thr-48.

It belongs to the archaeal ATPase family.

This is an uncharacterized protein from Methanocaldococcus jannaschii (strain ATCC 43067 / DSM 2661 / JAL-1 / JCM 10045 / NBRC 100440) (Methanococcus jannaschii).